We begin with the raw amino-acid sequence, 362 residues long: Terpene synthase 3 (362 aa).

Positions 90–95 (DDFLER) match the DDxx(x)D/E motif motif. The NDxxSxxxD/E motif signature appears at 239–247 (NDCVSYAKE).

This sequence belongs to the terpene synthase family.

The enzyme catalyses (2E,6E)-farnesyl diphosphate = beta-maaliene + diphosphate. The catalysed reaction is (2E,6E)-farnesyl diphosphate = aristolene + diphosphate. It carries out the reaction (2E,6E)-farnesyl diphosphate = calarene + diphosphate. It catalyses the reaction (2E)-geranyl diphosphate = (E)-beta-ocimene + diphosphate. The enzyme catalyses (2E)-geranyl diphosphate = (Z)-beta-ocimene + diphosphate. The catalysed reaction is (2E)-geranyl diphosphate + H2O = linalool + diphosphate. It carries out the reaction (2E)-geranyl diphosphate = beta-myrcene + diphosphate. Terpene synthase that converts its substrate farnesyl diphosphate (FPP) into an unidentified sesquiterpene as a major product, as well as beta-maaliene, aristolene, calarene and 2 additional unidentified sesquiterpene as minor products. Is also able to convert geranyl diphosphate (GPP) into a mixture of monoterpenes including (Z)-beta-ocimene, (E)-beta-ocimene, allo-ocimene, linalool and beta-myrcene. The protein is Terpene synthase 3 of Dictyostelium discoideum (Social amoeba).